Consider the following 430-residue polypeptide: MPIDFHLSASQKGTYQAARSLARNLLMPARQTYLQHPPNSPLRFQSTQPTYAAAVSAGILKGQISPAHGGTGGTLIESAILVEECYSVEPSAALTIFATGLGLTPINLAAGPQHAEFLAPFLSGEGSPLASLVFSEPGGVANALEKGAPGFQTTARLEGDEWVINGEKMWATNCAGWDFKGCDLACVVCRDATTPLEEGQDPENKVMIILVTRADLDRNGEGSFEVLRHVATPGHTSVSGPHVRYTNVRVPTKNVLCPAGQGAKVAFGAFDGSAVLVGAMGVGLMRAAFDAALKFAKEDNRGGAVPLLERQAFADLLSGVKIQTEAARALTWKAAHAMENGPGDYDARRELALAAKVFCSEAAVKACTDVINAVGISAYDLQRPFSDLLNTAVVLPIFDGGNVGIRRRHLQQLMLKPTYDAWSSTYGSFP.

Residues 132-135 (LVFS), 140-142 (VAN), 170-172 (WAT), R301, Q311, 372-376 (NAVGI), and 397-401 (IFDGG) contribute to the FAD site. D399 acts as the Proton acceptor in catalysis.

It belongs to the acyl-CoA dehydrogenase family. Homotetramer. The cofactor is FAD.

The catalysed reaction is a primary nitroalkane + O2 + H2O = an aldehyde + nitrite + H2O2 + H(+). It carries out the reaction a secondary nitroalkane + O2 + H2O = a ketone + nitrite + H2O2 + H(+). In terms of biological role, nitroalkane oxidase (NAO) catalyzes the oxidation of nitroalkanes to the corresponding aldehydes or ketones with the release of nitrite and the consumption of molecular oxygen to yield hydrogen peroxide. NAO is unusual, since it catalyzes substrate oxidation by removing a substrate proton to form a carbanion intermediate. Prefers longer nitroalkanes, with 1-nitrohexane having the highest activity. The chain is Nitroalkane oxidase from Podospora anserina (strain S / ATCC MYA-4624 / DSM 980 / FGSC 10383) (Pleurage anserina).